The primary structure comprises 323 residues: D-alanine--D-alanine ligase (323 aa).

The 197-residue stretch at 121–317 (RIWFLTNNIN…FTNLIEEIIK (197 aa)) folds into the ATP-grasp domain. Residue 147–199 (PMKRPYVIKPLAQGSSIGVEVIFAEDDFNFADYDFPYGDQVIIEQYIKGQGRE) participates in ATP binding. Residues Glu270, Glu284, and Asn286 each contribute to the Mg(2+) site.

The protein belongs to the D-alanine--D-alanine ligase family. It depends on Mg(2+) as a cofactor. Requires Mn(2+) as cofactor.

Its subcellular location is the cytoplasm. It carries out the reaction 2 D-alanine + ATP = D-alanyl-D-alanine + ADP + phosphate + H(+). Its pathway is cell wall biogenesis; peptidoglycan biosynthesis. Cell wall formation. The polypeptide is D-alanine--D-alanine ligase (Rickettsia peacockii (strain Rustic)).